Consider the following 108-residue polypeptide: uncharacterized protein (108 aa).

This is an uncharacterized protein from Acanthamoeba polyphaga mimivirus (APMV).